A 124-amino-acid chain; its full sequence is Small ribosomal subunit protein uS13 (124 aa).

The tract at residues 98–124 (VRGQRTRCNARTRKGPRKTVGAKRKEK) is disordered.

It belongs to the universal ribosomal protein uS13 family. As to quaternary structure, part of the 30S ribosomal subunit. Forms a loose heterodimer with protein S19. Forms two bridges to the 50S subunit in the 70S ribosome.

Located at the top of the head of the 30S subunit, it contacts several helices of the 16S rRNA. In the 70S ribosome it contacts the 23S rRNA (bridge B1a) and protein L5 of the 50S subunit (bridge B1b), connecting the 2 subunits; these bridges are implicated in subunit movement. Contacts the tRNAs in the A and P-sites. This is Small ribosomal subunit protein uS13 from Dictyoglomus turgidum (strain DSM 6724 / Z-1310).